The following is a 488-amino-acid chain: (S)-canadine synthase CYP719A21 (488 aa).

Residues Leu6 to Phe26 form a helical membrane-spanning segment. Position 432 (Cys432) interacts with heme.

The protein belongs to the cytochrome P450 family. It depends on heme as a cofactor.

The protein resides in the membrane. The enzyme catalyses (S)-tetrahydrocolumbamine + reduced [NADPH--hemoprotein reductase] + O2 = (S)-canadine + oxidized [NADPH--hemoprotein reductase] + 2 H2O + H(+). The protein operates within alkaloid biosynthesis. Its function is as follows. Cytochrome P450 involved in the biosynthesis of the benzylisoquinoline alkaloid noscapine. Converts (S)-tetrahydrocolumbamine to (S)-canadine. This chain is (S)-canadine synthase CYP719A21, found in Papaver somniferum (Opium poppy).